Reading from the N-terminus, the 211-residue chain is MAQAKINAKANEGRFCRSSSMADRSSRLLESLDQLELRVEALREAATAVEQEKEILLEMIHSIQNSQDMRQISDGEREELNLTANRLMGRTLTVEVSVETIRNPQQQESLKHATRIIDEVVNKFLDDLGNAKSHLMSLYSACSSEVPHGPVDQKFQSIVIGCALEDQKKIKRRLETLLRNIENSDKAIKLLEHSKGAGSKTLQQNAESRFN.

At Ala-2 the chain carries N-acetylalanine. Phosphoserine occurs at positions 20, 31, and 73. The stretch at 20-61 forms a coiled coil; sequence SMADRSSRLLESLDQLELRVEALREAATAVEQEKEILLEMIH. A BAG domain is found at 109 to 189; that stretch reads SLKHATRIID…NIENSDKAIK (81 aa).

In terms of assembly, binds to the ATPase domain of HSP/HSC70 chaperones. May interact with NWD1. Interacts with HSPA1A (via NBD), HSPA1B (via NBD) and HSPA8. May interact with DNJC9; the interaction seems to be histone-dependent.

Its function is as follows. Co-chaperone for HSP70 and HSC70 chaperone proteins. Acts as a nucleotide-exchange factor (NEF) promoting the release of ADP from the HSP70 and HSC70 proteins thereby triggering client/substrate protein release. The protein is BAG family molecular chaperone regulator 2 (BAG2) of Homo sapiens (Human).